A 108-amino-acid polypeptide reads, in one-letter code: PTS system cellobiose-specific EIIB component (108 aa).

The 106-residue stretch at 3–108 (DKVIALACAA…VLAAAENLMN (106 aa)) folds into the PTS EIIB type-3 domain. The active-site Phosphocysteine intermediate is the C10. C10 carries the phosphocysteine; by EIIA modification.

It catalyses the reaction D-cellobiose(out) + N(pros)-phospho-L-histidyl-[protein] = 6-phospho-beta-D-glucosyl-(1-&gt;4)-D-glucose(in) + L-histidyl-[protein]. Functionally, the phosphoenolpyruvate-dependent sugar phosphotransferase system (sugar PTS), a major carbohydrate active transport system, catalyzes the phosphorylation of incoming sugar substrates concomitantly with their translocation across the cell membrane. Involved in cellobiose transport with PtcA and CelB. This system can also transport lactose. In Lactococcus lactis subsp. lactis (strain IL1403) (Streptococcus lactis), this protein is PTS system cellobiose-specific EIIB component.